A 392-amino-acid chain; its full sequence is MTIPDVPTQTLPDEGEIGFVHIGSLTTEAGAVIDDVHIAVQRWGELSPTRDNVVVVLHALTGDSHVTGPAGPGHPTGGWWDEMVGPGAPIDTDRWCAVATNVLGGCRGSTGPSSRTRDGKPWGSRFPRISIRDQVEADIAALAALGIDEVAAVVGGSMGGARALEWIVGHPSRVRAGLLLAVGARATADQIGTQCTQIAAIKSDPNWQGGDYHDTGRTPDAGLAIARRFAHLTYRGEVELDTRFGNDAQLDEDPANGGRYAVQSYLEYQGVKLVERFDAGSYVVLTEALNSHDVGRARGGVRKALRSCPVPVVVGGITSDRLYPLRLQQELAEQLPGCAELQVVDSICGHDGFLVESEAVGEMIRKTLLLAGSQSAGPGGAGPGSRKGTTRR.

Positions 52–356 (NVVVVLHALT…ICGHDGFLVE (305 aa)) constitute an AB hydrolase-1 domain. Catalysis depends on Ser157, which acts as the Nucleophile. A substrate-binding site is contributed by Arg227. Active-site residues include Asp320 and His350. Asp351 provides a ligand contact to substrate. Residues 373–392 (SQSAGPGGAGPGSRKGTTRR) are disordered.

Belongs to the AB hydrolase superfamily. MetX family. In terms of assembly, homodimer.

It is found in the cytoplasm. The catalysed reaction is L-homoserine + acetyl-CoA = O-acetyl-L-homoserine + CoA. Its pathway is amino-acid biosynthesis; L-methionine biosynthesis via de novo pathway; O-acetyl-L-homoserine from L-homoserine: step 1/1. Its function is as follows. Transfers an acetyl group from acetyl-CoA to L-homoserine, forming acetyl-L-homoserine. In Mycobacterium avium (strain 104), this protein is Homoserine O-acetyltransferase.